A 299-amino-acid chain; its full sequence is Probable alpha-L-glutamate ligase (299 aa).

Positions 112-294 constitute an ATP-grasp domain; the sequence is LQLLTEQGIA…IALQMIVHIE (183 aa). ATP is bound by residues Lys148, 185–186, Asp194, and 218–220; these read DF and RAN. Mg(2+) contacts are provided by Asp255, Glu267, and Asn269. Residues Asp255, Glu267, and Asn269 each coordinate Mn(2+).

Belongs to the RimK family. Mg(2+) is required as a cofactor. Requires Mn(2+) as cofactor.

The sequence is that of Probable alpha-L-glutamate ligase from Histophilus somni (strain 129Pt) (Haemophilus somnus).